The following is a 427-amino-acid chain: Acetyl-CoA acetyltransferase, mitochondrial (427 aa).

The transit peptide at Met1–Tyr33 directs the protein to the mitochondrion. Lys66 is subject to N6-acetyllysine; alternate. Lys66 is subject to N6-succinyllysine; alternate. Lys78 is subject to N6-succinyllysine. The active-site Acyl-thioester intermediate is the Cys126. An N6-acetyllysine; alternate mark is found at Lys174, Lys181, Lys190, and Lys202. 4 positions are modified to N6-succinyllysine; alternate: Lys174, Lys181, Lys190, and Lys202. Residue Tyr219 participates in CoA binding. Tyr219 serves as a coordination point for K(+). 2 positions are modified to N6-acetyllysine; alternate: Lys223 and Lys230. 2 positions are modified to N6-succinyllysine; alternate: Lys223 and Lys230. Lys243 carries the post-translational modification N6-succinyllysine. 2 positions are modified to N6-acetyllysine: Lys251 and Lys257. CoA is bound by residues Arg258–Asp260 and Lys263. An N6-acetyllysine; alternate modification is found at Lys263. The residue at position 263 (Lys263) is an N6-succinyllysine; alternate. An N6-succinyllysine mark is found at Lys266 and Lys268. Lys273 carries the N6-acetyllysine modification. K(+) is bound by residues Ala280, Ala281, and Ala283. Ser284 serves as a coordination point for CoA. Lys338 carries the post-translational modification N6-acetyllysine. Val381 provides a ligand contact to K(+). The active-site Proton donor/acceptor is Cys413.

This sequence belongs to the thiolase-like superfamily. Thiolase family. In terms of assembly, homotetramer. In terms of processing, succinylation at Lys-268, adjacent to a coenzyme A binding site. Desuccinylated by SIRT5.

It localises to the mitochondrion. The catalysed reaction is 2 acetyl-CoA = acetoacetyl-CoA + CoA. It catalyses the reaction propanoyl-CoA + acetyl-CoA = 2-methyl-3-oxobutanoyl-CoA + CoA. It participates in lipid metabolism; fatty acid beta-oxidation. With respect to regulation, activated by potassium ions, but not sodium ions. Its function is as follows. This is one of the enzymes that catalyzes the last step of the mitochondrial beta-oxidation pathway, an aerobic process breaking down fatty acids into acetyl-CoA. Using free coenzyme A/CoA, catalyzes the thiolytic cleavage of medium- to long-chain 3-oxoacyl-CoAs into acetyl-CoA and a fatty acyl-CoA shortened by two carbon atoms. The activity of the enzyme is reversible and it can also catalyze the condensation of two acetyl-CoA molecules into acetoacetyl-CoA. Thereby, it plays a major role in ketone body metabolism. The sequence is that of Acetyl-CoA acetyltransferase, mitochondrial (ACAT1) from Macaca fascicularis (Crab-eating macaque).